A 671-amino-acid chain; its full sequence is Nucleolar GTP-binding protein 1 (671 aa).

One can recognise an OBG-type G domain in the interval 169-350; sequence RTVLICGYPN…VKNAACERLL (182 aa). GTP contacts are provided by residues 175–182, 221–225, and 289–292; these read GYPNVGKS, DTPGI, and NKTD. A disordered region spans residues 516–671; that stretch reads VAQNRSTVPR…KRGKGKTDRR (156 aa). Positions 595-605 are enriched in polar residues; it reads RAMSISRSQSR. Composition is skewed to basic residues over residues 631–640 and 654–671; these read NKSHKKRDKN and RPKHLFSGKRGKGKTDRR.

This sequence belongs to the TRAFAC class OBG-HflX-like GTPase superfamily. OBG GTPase family. NOG subfamily.

The protein resides in the nucleus. Its subcellular location is the nucleolus. Its function is as follows. Involved in the biogenesis of the 60S ribosomal subunit. This Arabidopsis thaliana (Mouse-ear cress) protein is Nucleolar GTP-binding protein 1.